A 155-amino-acid chain; its full sequence is uncharacterized protein (155 aa).

Disordered regions lie at residues 1–22 and 108–155; these read MSSQ…TFTF and PFNK…DTQA. S2 carries the post-translational modification N-acetylserine. 3 positions are modified to phosphoserine: S136, S144, and S146. Acidic residues predominate over residues 136–155; it reads SDEDLDAESDSEGEDEDTQA.

This is an uncharacterized protein from Rattus norvegicus (Rat).